A 218-amino-acid polypeptide reads, in one-letter code: Large ribosomal subunit protein uL3 (218 aa).

The disordered stretch occupies residues 133-158 (RGQGASHGAQAVHRRPGSIGGCATPG).

Belongs to the universal ribosomal protein uL3 family. As to quaternary structure, part of the 50S ribosomal subunit. Forms a cluster with proteins L14 and L19.

In terms of biological role, one of the primary rRNA binding proteins, it binds directly near the 3'-end of the 23S rRNA, where it nucleates assembly of the 50S subunit. The sequence is that of Large ribosomal subunit protein uL3 from Mycolicibacterium vanbaalenii (strain DSM 7251 / JCM 13017 / BCRC 16820 / KCTC 9966 / NRRL B-24157 / PYR-1) (Mycobacterium vanbaalenii).